The primary structure comprises 401 residues: CCA-adding enzyme (401 aa).

Residues Gly32 and Arg35 each contribute to the ATP site. Residues Gly32 and Arg35 each contribute to the CTP site. Residues Asp45 and Asp47 each contribute to the Mg(2+) site. Positions 116, 159, 162, 165, and 168 each coordinate ATP. 5 residues coordinate CTP: Arg116, Asp159, Arg162, Arg165, and Arg168.

The protein belongs to the tRNA nucleotidyltransferase/poly(A) polymerase family. Bacterial CCA-adding enzyme type 3 subfamily. Homodimer. Mg(2+) serves as cofactor.

It carries out the reaction a tRNA precursor + 2 CTP + ATP = a tRNA with a 3' CCA end + 3 diphosphate. The enzyme catalyses a tRNA with a 3' CCA end + 2 CTP + ATP = a tRNA with a 3' CCACCA end + 3 diphosphate. Catalyzes the addition and repair of the essential 3'-terminal CCA sequence in tRNAs without using a nucleic acid template. Adds these three nucleotides in the order of C, C, and A to the tRNA nucleotide-73, using CTP and ATP as substrates and producing inorganic pyrophosphate. tRNA 3'-terminal CCA addition is required both for tRNA processing and repair. Also involved in tRNA surveillance by mediating tandem CCA addition to generate a CCACCA at the 3' terminus of unstable tRNAs. While stable tRNAs receive only 3'-terminal CCA, unstable tRNAs are marked with CCACCA and rapidly degraded. The sequence is that of CCA-adding enzyme from Streptococcus mutans serotype c (strain ATCC 700610 / UA159).